The chain runs to 126 residues: Cyclin-dependent kinase 2-associated protein 2 (126 aa).

The interval 1–48 (MSYKPIAPAPSSTPGSSTPGPGTPVPTGSVPSPSGSVPGAGAPFRPLF) is disordered. Positions 9–43 (APSSTPGSSTPGPGTPVPTGSVPSPSGSVPGAGAP) are enriched in low complexity. The tract at residues 64-106 (PPGAQGSQSTYTDLLSVIEEMGKEIRPTYAGSKSAMERLKRGI) is interaction with CDK2.

Belongs to the CDK2AP family. In terms of assembly, component of the nucleosome remodeling and deacetylase (NuRD) repressor complex, composed of core proteins MTA1, MTA2, MTA3, RBBP4, RBBP7, HDAC1, HDAC2, MBD2, MBD3, and peripherally associated proteins CDK2AP1, CDK2AP2, GATAD2A, GATAD2B, CHD3, CHD4 and CHD5. The exact stoichiometry of the NuRD complex is unknown, and some subunits such as MBD2 and MBD3, GATAD2A and GATAD2B, and CHD3, CHD4 and CHD5 define mutually exclusive NuRD complexes. Interacts with CDK2AP1. Interacts with CDK2. Interacts with MAPK1. Post-translationally, phosphorylated by MAPK1 and CDK2. In terms of tissue distribution, ubiquitous.

The protein resides in the cytoplasm. Its subcellular location is the nucleus. Acts as a component of the histone deacetylase NuRD complex which participates in the remodeling of chromatin. Inhibits cell cycle G1/S phase transition by repressing CDK2 expression and activation; represses CDK2 activation by inhibiting its interaction with cyclin E and A. Plays a role in regulating the self-renewal of embryonic stem cells (ESCs) and in maintaining cell survival during terminal differentiation of ESCs. Regulates microtubule organization of metaphase II oocytes. The chain is Cyclin-dependent kinase 2-associated protein 2 (CDK2AP2) from Homo sapiens (Human).